Consider the following 238-residue polypeptide: Ribonuclease PH (238 aa).

Residues Arg-86 and 124–126 contribute to the phosphate site; that span reads GTR.

This sequence belongs to the RNase PH family. In terms of assembly, homohexameric ring arranged as a trimer of dimers.

It carries out the reaction tRNA(n+1) + phosphate = tRNA(n) + a ribonucleoside 5'-diphosphate. Phosphorolytic 3'-5' exoribonuclease that plays an important role in tRNA 3'-end maturation. Removes nucleotide residues following the 3'-CCA terminus of tRNAs; can also add nucleotides to the ends of RNA molecules by using nucleoside diphosphates as substrates, but this may not be physiologically important. Probably plays a role in initiation of 16S rRNA degradation (leading to ribosome degradation) during starvation. This is Ribonuclease PH from Brucella abortus (strain S19).